Reading from the N-terminus, the 564-residue chain is Septation ring formation regulator EzrA (564 aa).

Over 1 to 2 the chain is Extracellular; it reads MV. A helical membrane pass occupies residues 3–21; that stretch reads FVISVILAIIVILTIGLIL. The Cytoplasmic segment spans residues 22–564; it reads RKRIYDKVDH…IEENQLTLNR (543 aa). Coiled-coil stretches lie at residues 101–140, 168–215, 251–436, and 468–537; these read ANNILTEGDQKLQNIEVKIEEILEELDELLSSEKTSREEV, FDKK…MEQF, GFDK…KKSN, and DIAK…ELSL.

The protein belongs to the EzrA family.

Its subcellular location is the cell membrane. In terms of biological role, negative regulator of FtsZ ring formation; modulates the frequency and position of FtsZ ring formation. Inhibits FtsZ ring formation at polar sites. Interacts either with FtsZ or with one of its binding partners to promote depolymerization. In Oceanobacillus iheyensis (strain DSM 14371 / CIP 107618 / JCM 11309 / KCTC 3954 / HTE831), this protein is Septation ring formation regulator EzrA.